We begin with the raw amino-acid sequence, 213 residues long: Adenylyl-sulfate kinase (213 aa).

Residues methionine 1–aspartate 17 are compositionally biased toward basic and acidic residues. The interval methionine 1–isoleucine 20 is disordered. An ATP-binding site is contributed by glycine 47–serine 54. Residue serine 121 is the Phosphoserine intermediate of the active site.

The protein belongs to the APS kinase family.

The enzyme catalyses adenosine 5'-phosphosulfate + ATP = 3'-phosphoadenylyl sulfate + ADP + H(+). It participates in sulfur metabolism; hydrogen sulfide biosynthesis; sulfite from sulfate: step 2/3. Catalyzes the synthesis of activated sulfate. The chain is Adenylyl-sulfate kinase from Yersinia pestis.